The following is a 513-amino-acid chain: GMP synthase [glutamine-hydrolyzing] (513 aa).

The Glutamine amidotransferase type-1 domain maps to methionine 8–glutamate 198. Catalysis depends on cysteine 85, which acts as the Nucleophile. Residues histidine 172 and glutamate 174 contribute to the active site. Positions tryptophan 199 to arginine 388 constitute a GMPS ATP-PPase domain. Glycine 227–valine 233 serves as a coordination point for ATP.

As to quaternary structure, homodimer.

The enzyme catalyses XMP + L-glutamine + ATP + H2O = GMP + L-glutamate + AMP + diphosphate + 2 H(+). It participates in purine metabolism; GMP biosynthesis; GMP from XMP (L-Gln route): step 1/1. Catalyzes the synthesis of GMP from XMP. This is GMP synthase [glutamine-hydrolyzing] (guaA) from Bacillus subtilis (strain 168).